The primary structure comprises 156 residues: Regulatory protein RecX (156 aa).

Belongs to the RecX family.

It localises to the cytoplasm. Functionally, modulates RecA activity. The protein is Regulatory protein RecX of Pseudomonas putida (strain ATCC 47054 / DSM 6125 / CFBP 8728 / NCIMB 11950 / KT2440).